The following is a 333-amino-acid chain: Nucleoid-associated protein APJL_0454 (333 aa).

Belongs to the YejK family.

It localises to the cytoplasm. Its subcellular location is the nucleoid. This chain is Nucleoid-associated protein APJL_0454, found in Actinobacillus pleuropneumoniae serotype 3 (strain JL03).